We begin with the raw amino-acid sequence, 305 residues long: MDGIIPLYKERGMTSNDCVFKVRRILHMKKVGHSGTLDPNVDGVLPICIGQATKVVDQLVHSGKVYTGEITLGLSTTTEDLDGEVVEEQQLTEPISTEKIKETLASFLGESIQIPPMFSAVKVNGRRLYDYARAGDPVERPQRKITITQFDLQGEPEFDAKTGRQTFRFIAGCSKGTYIRTLAVDFGRKLGLPAVMSDLTRLKSGGIQIGSCVTLAQLAEAADNGQLADILIPLDHVFEENVKIALDDDQWAKILNGVFLTFPEQTEEILALTYEGHIKALYQVANAKQHLYRPYKMYLQNQGTH.

Asp38 serves as the catalytic Nucleophile.

Belongs to the pseudouridine synthase TruB family. Type 1 subfamily.

It carries out the reaction uridine(55) in tRNA = pseudouridine(55) in tRNA. Functionally, responsible for synthesis of pseudouridine from uracil-55 in the psi GC loop of transfer RNAs. In Latilactobacillus sakei subsp. sakei (strain 23K) (Lactobacillus sakei subsp. sakei), this protein is tRNA pseudouridine synthase B.